The sequence spans 829 residues: Periplasmic nitrate reductase (829 aa).

The segment at residues 1–30 (MKMTRRAFVKANAAASAAAVAGITLPASAA) is a signal peptide (tat-type signal). A 4Fe-4S Mo/W bis-MGD-type domain is found at 41–97 (ITWDKAPCRFCGTGCSVLVGTQNGKVVATQGDPEAPVNKGLNCIKGYFLSKIMYGQD). Residues Cys-48, Cys-51, Cys-55, and Cys-83 each contribute to the [4Fe-4S] cluster site. Mo-bis(molybdopterin guanine dinucleotide)-binding positions include Lys-85, Gln-152, Asn-177, Cys-181, 214–221 (WGSNMAEM), 245–249 (STYYH), 264–266 (QSD), Met-374, Gln-378, Asn-484, 510–511 (SD), Lys-533, Asp-560, and 718–727 (TGRVLEHWHT). Phe-794 provides a ligand contact to substrate. Residues Asn-802 and Lys-819 each contribute to the Mo-bis(molybdopterin guanine dinucleotide) site.

It belongs to the prokaryotic molybdopterin-containing oxidoreductase family. NasA/NapA/NarB subfamily. In terms of assembly, component of the periplasmic nitrate reductase NapAB complex composed of NapA and NapB. [4Fe-4S] cluster serves as cofactor. The cofactor is Mo-bis(molybdopterin guanine dinucleotide). Post-translationally, predicted to be exported by the Tat system. The position of the signal peptide cleavage has not been experimentally proven.

It localises to the periplasm. It carries out the reaction 2 Fe(II)-[cytochrome] + nitrate + 2 H(+) = 2 Fe(III)-[cytochrome] + nitrite + H2O. Functionally, catalytic subunit of the periplasmic nitrate reductase complex NapAB. Receives electrons from NapB and catalyzes the reduction of nitrate to nitrite. The protein is Periplasmic nitrate reductase of Vibrio vulnificus (strain YJ016).